The following is a 277-amino-acid chain: Cis-2,3-dihydrobiphenyl-2,3-diol dehydrogenase (277 aa).

Residues 9 to 36 (LITG…AVLD) and Asp59 each bind NAD(+). Ser142 provides a ligand contact to substrate. Tyr155 acts as the Proton acceptor in catalysis. Lys159 serves as a coordination point for NAD(+).

Belongs to the short-chain dehydrogenases/reductases (SDR) family.

It catalyses the reaction (2R,3S)-3-phenylcyclohexa-3,5-diene-1,2-diol + NAD(+) = biphenyl-2,3-diol + NADH + H(+). It functions in the pathway xenobiotic degradation; biphenyl degradation; 2-hydroxy-2,4-pentadienoate and benzoate from biphenyl: step 2/4. This Paraburkholderia xenovorans (strain LB400) protein is Cis-2,3-dihydrobiphenyl-2,3-diol dehydrogenase (bphB).